The chain runs to 233 residues: Uridylate kinase (233 aa).

9 to 10 (GS) contacts ATP. Residue glycine 43 participates in UMP binding. ATP contacts are provided by glycine 44 and arginine 48. Residues aspartate 65 and 113-119 (VTPGQTT) each bind UMP. 3 residues coordinate ATP: threonine 139, tyrosine 145, and aspartate 148.

Belongs to the UMP kinase family. As to quaternary structure, homohexamer.

It localises to the cytoplasm. The catalysed reaction is UMP + ATP = UDP + ADP. It participates in pyrimidine metabolism; CTP biosynthesis via de novo pathway; UDP from UMP (UMPK route): step 1/1. Its activity is regulated as follows. Inhibited by UTP. Catalyzes the reversible phosphorylation of UMP to UDP. The sequence is that of Uridylate kinase from Methanosarcina acetivorans (strain ATCC 35395 / DSM 2834 / JCM 12185 / C2A).